Reading from the N-terminus, the 267-residue chain is uncharacterized protein (267 aa).

It to S.pombe SpAC18G6.12c.

This is an uncharacterized protein from Schizosaccharomyces pombe (strain 972 / ATCC 24843) (Fission yeast).